Consider the following 1013-residue polypeptide: NHS-like protein 3 (1013 aa).

Lysine 17 bears the Phosphoserine mark. The disordered stretch occupies residues 20–195; it reads SAKAESDNRQ…PPGSRDAVRI (176 aa). Positions 73–89 are enriched in basic and acidic residues; the sequence is QHQERQKLSKGGWDHGD. Composition is skewed to polar residues over residues 90-99 and 106-120; these read TQSIQSSQTG and SIYS…SSTA. The residue at position 92 (serine 92) is a Phosphoserine. Phosphotyrosine is present on tyrosine 108. Phosphoserine is present on residues serine 136, serine 143, and serine 159. Threonine 160 is subject to Phosphothreonine. A compositionally biased stretch (basic and acidic residues) spans 168–178; that stretch reads VQKELGLRNNR. Residue serine 213 is modified to Phosphoserine. Arginine 318 is subject to Asymmetric dimethylarginine. Residues serine 320, serine 325, serine 328, serine 336, serine 337, serine 339, and serine 340 each carry the phosphoserine modification. The tract at residues 330–1013 is disordered; sequence RSLGRFSSAS…PGSDPQKKLV (684 aa). Low complexity predominate over residues 336–361; that stretch reads SSASSPRPRSRNASSSSDNWSHSQSS. Residues 362–375 show a composition bias toward polar residues; the sequence is ETIVSDGSTLSSKG. A phosphoserine mark is found at serine 398, serine 402, and serine 407. Residues 408–427 are compositionally biased toward polar residues; it reads TAETSDTASIRSSGQLSGRS. 2 stretches are compositionally biased toward low complexity: residues 484-493 and 515-530; these read VGAVSCPPSS and RTLS…SGTP. Phosphothreonine is present on threonine 529. A Phosphoserine modification is found at serine 543. Low complexity predominate over residues 564–577; that stretch reads SVSSSLTSLCSSSS. Threonine 591 bears the Phosphothreonine mark. Residues 600–614 show a composition bias toward pro residues; it reads PPHPKVPAPFSPPPS. Serine 610 carries the post-translational modification Phosphoserine. Over residues 615 to 633 the composition is skewed to low complexity; the sequence is KSKSSNQAAPVLAAPAVAP. A compositionally biased stretch (polar residues) spans 635 to 657; it reads QVSTIDTSPASPSMPQTTLTPAQ. Phosphoserine occurs at positions 667 and 671. 2 stretches are compositionally biased toward pro residues: residues 668–683 and 706–716; these read PPPS…PPPT and PSWPPPPPPAP. The span at 779-795 shows a compositional bias: basic and acidic residues; sequence PQKDSVGKHSGAPREDS. A compositionally biased stretch (polar residues) spans 814–829; sequence GASTGIPNPSPGSSAP. A phosphoserine mark is found at serine 838, serine 842, and serine 848. The segment covering 859–873 has biased composition (low complexity); that stretch reads ASSLAASESPASALP. Phosphoserine is present on residues serine 909, serine 952, and serine 959. Over residues 942–961 the composition is skewed to pro residues; that stretch reads KAPPPVARKPSVGVPPPSPS. A compositionally biased stretch (polar residues) spans 964 to 975; that stretch reads RTESLTAPSTNG.

Able to directly activate the TNF-NFkappaB signaling pathway. This Mus musculus (Mouse) protein is NHS-like protein 3 (Nhsl3).